The primary structure comprises 391 residues: uncharacterized protein (391 aa).

This is an uncharacterized protein from Sinorhizobium fredii (strain NBRC 101917 / NGR234).